The sequence spans 306 residues: Acetyl-coenzyme A carboxylase carboxyl transferase subunit beta (306 aa).

Positions 27–296 (LWHKCPSCEA…PKFVAAPIEP (270 aa)) constitute a CoA carboxyltransferase N-terminal domain. 4 residues coordinate Zn(2+): Cys31, Cys34, Cys50, and Cys53. The segment at 31–53 (CPSCEAVLYRPELEKTLDVCPKC) adopts a C4-type zinc-finger fold.

It belongs to the AccD/PCCB family. In terms of assembly, acetyl-CoA carboxylase is a heterohexamer composed of biotin carboxyl carrier protein (AccB), biotin carboxylase (AccC) and two subunits each of ACCase subunit alpha (AccA) and ACCase subunit beta (AccD). The cofactor is Zn(2+).

It is found in the cytoplasm. It catalyses the reaction N(6)-carboxybiotinyl-L-lysyl-[protein] + acetyl-CoA = N(6)-biotinyl-L-lysyl-[protein] + malonyl-CoA. It functions in the pathway lipid metabolism; malonyl-CoA biosynthesis; malonyl-CoA from acetyl-CoA: step 1/1. Its function is as follows. Component of the acetyl coenzyme A carboxylase (ACC) complex. Biotin carboxylase (BC) catalyzes the carboxylation of biotin on its carrier protein (BCCP) and then the CO(2) group is transferred by the transcarboxylase to acetyl-CoA to form malonyl-CoA. This Pseudomonas fluorescens (strain Pf0-1) protein is Acetyl-coenzyme A carboxylase carboxyl transferase subunit beta.